The chain runs to 300 residues: Uricase (300 aa).

Position 2 is an N-acetylalanine (Ala-2). 2 positions are modified to N6-acetyllysine; alternate: Lys-6 and Lys-19. Lys-6 and Lys-19 each carry N6-succinyllysine; alternate. The active-site Charge relay system is the Lys-19. Residues Lys-23 and Lys-32 each carry the N6-acetyllysine modification. A phosphoserine mark is found at Ser-35 and Ser-59. Thr-64 functions as the Charge relay system in the catalytic mechanism. Residues Thr-64 and Asp-65 each contribute to the urate site. Residues Lys-114, Lys-118, and Lys-160 each carry the N6-acetyllysine modification. Phe-166 is a urate binding site. N6-acetyllysine occurs at positions 171 and 181. Arg-183 is a binding site for urate. 2 positions are modified to N6-acetyllysine; alternate: Lys-217 and Lys-224. 2 positions are modified to N6-succinyllysine; alternate: Lys-217 and Lys-224. Position 228 is a phosphoserine (Ser-228). Urate is bound by residues Val-231, Gln-232, and Asn-258. Residue His-260 is the Charge relay system of the active site. Lys-274 is modified (N6-acetyllysine). Phosphotyrosine is present on Tyr-285. A Microbody targeting signal motif is present at residues 298–300 (SRL).

Belongs to the uricase family.

It is found in the peroxisome. The catalysed reaction is urate + O2 + H2O = 5-hydroxyisourate + H2O2. The protein operates within purine metabolism; urate degradation; (S)-allantoin from urate: step 1/3. In terms of biological role, catalyzes the oxidation of uric acid to 5-hydroxyisourate, which is further processed to form (S)-allantoin. The polypeptide is Uricase (UOX) (Oryctolagus cuniculus (Rabbit)).